The primary structure comprises 189 residues: Proline-rich protein 29 (189 aa).

The interval 152 to 189 (SREREVRAVPPPPPPSATGTVGADVPPASDYYDAESLL) is disordered.

In Homo sapiens (Human), this protein is Proline-rich protein 29 (PRR29).